The chain runs to 427 residues: Dihydroorotase (427 aa).

Positions 60 and 62 each coordinate Zn(2+). Residues 62–64 and N94 each bind substrate; that span reads HLR. Zn(2+)-binding residues include D152, H179, and H232. A substrate-binding site is contributed by N278. D305 lines the Zn(2+) pocket. The active site involves D305. Substrate contacts are provided by residues H309 and 323 to 324; that span reads FG.

This sequence belongs to the metallo-dependent hydrolases superfamily. DHOase family. Class I DHOase subfamily. Zn(2+) is required as a cofactor.

It catalyses the reaction (S)-dihydroorotate + H2O = N-carbamoyl-L-aspartate + H(+). It participates in pyrimidine metabolism; UMP biosynthesis via de novo pathway; (S)-dihydroorotate from bicarbonate: step 3/3. Its function is as follows. Catalyzes the reversible cyclization of carbamoyl aspartate to dihydroorotate. In Bacillus caldolyticus, this protein is Dihydroorotase.